Reading from the N-terminus, the 283-residue chain is Agmatinase (283 aa).

A divalent metal cation-binding residues include His-112, Asp-131, His-133, Asp-135, Asp-211, and Asp-213.

It belongs to the arginase family. Agmatinase subfamily. As to quaternary structure, homotetramer. A divalent metal cation is required as a cofactor.

It carries out the reaction agmatine + H2O = urea + putrescine. It participates in amine and polyamine biosynthesis; putrescine biosynthesis via agmatine pathway; putrescine from agmatine: step 1/1. Its activity is regulated as follows. Inhibited by putrescine. Activity is not affected by arginine and ornithine. Catalyzes the formation of putrescine from agmatine. Cannot use arginine. The protein is Agmatinase of Pyrococcus horikoshii (strain ATCC 700860 / DSM 12428 / JCM 9974 / NBRC 100139 / OT-3).